Reading from the N-terminus, the 538-residue chain is Mitochondria-eating protein (538 aa).

The interaction with YWHAG/14-3-3 protein gamma stretch occupies residues 1-273 (MAENLKRLVS…PRSRSCSRSR (273 aa)). Ser85 carries the post-translational modification Phosphoserine. Positions 97 to 137 (SKVPSLQDTFDRERHKDPSPRDRDMQQLDSNLNSTRSQCNQ) are disordered. Residues 105–122 (TFDRERHKDPSPRDRDMQ) show a composition bias toward basic and acidic residues. Coiled coils occupy residues 118–187 (DRDM…RHRN) and 219–256 (DQQD…RSSR). Positions 123 to 137 (QLDSNLNSTRSQCNQ) are enriched in polar residues. Phosphoserine occurs at positions 156 and 159. Disordered stretches follow at residues 173-226 (QLKS…TEAM) and 247-294 (KSAL…SKLS). The segment covering 181-210 (EDARHRNTDQRSSENRRSEPWSLEERKREQ) has biased composition (basic and acidic residues). Residues 211–224 (WNSLKQNADQQDTE) show a composition bias toward polar residues. Low complexity predominate over residues 253–278 (RSSRSRSPSPAPRSRSCSRSRSASPS). 2 positions are modified to phosphoserine: Ser287 and Ser509.

The protein belongs to the MIEAP family. Interacts (via coiled-coil domains) with BNIP3L (via BH3 domain). Interacts (via coiled-coil domains) with BNIP3 (via BH3 domain). In terms of assembly, interacts with YWHAG/14-3-3 protein gamma; a protein that also plays a role in MALM.

The protein localises to the cytoplasm. It localises to the cytosol. Its subcellular location is the mitochondrion outer membrane. It is found in the mitochondrion matrix. Its function is as follows. Key regulator of mitochondrial quality that mediates the repairing or degradation of unhealthy mitochondria in response to mitochondrial damage. Mediator of mitochondrial protein catabolic process (also named MALM) by mediating the degradation of damaged proteins inside mitochondria by promoting the accumulation in the mitochondrial matrix of hydrolases that are characteristic of the lysosomal lumen. Also involved in mitochondrion degradation of damaged mitochondria by promoting the formation of vacuole-like structures (named MIV), which engulf and degrade unhealthy mitochondria by accumulating lysosomes. The physical interaction of SPATA18/MIEAP, BNIP3 and BNIP3L/NIX at the mitochondrial outer membrane regulates the opening of a pore in the mitochondrial double membrane in order to mediate the translocation of lysosomal proteins from the cytoplasm to the mitochondrial matrix. Binds cardiolipin. May form molecular condensates (non-membrane-bounded organelles) within mitochondria that compartmentalize and promote cardiolipin metabolism. The sequence is that of Mitochondria-eating protein (SPATA18) from Homo sapiens (Human).